Consider the following 681-residue polypeptide: PAB-dependent poly(A)-specific ribonuclease subunit pan3-like (681 aa).

Residues 9 to 38 (FSTNIPCRNEQLYGRCPYIDKGCFFQHKNQ) form a C3H1-type zinc finger. Disordered stretches follow at residues 38-58 (QDNA…PQNS) and 82-123 (SSAS…TVSL). Low complexity predominate over residues 41-50 (APASSKPPSA). Residues 96-106 (KSYSSALSSGK) show a composition bias toward polar residues. Ser165 carries the phosphoserine modification.

The protein belongs to the protein kinase superfamily. PAN3 family.

The protein localises to the cytoplasm. Regulatory subunit of the poly(A)-nuclease (PAN) deadenylation complex. The chain is PAB-dependent poly(A)-specific ribonuclease subunit pan3-like from Schizosaccharomyces pombe (strain 972 / ATCC 24843) (Fission yeast).